A 105-amino-acid chain; its full sequence is Putative ferredoxin-3 (105 aa).

4Fe-4S ferredoxin-type domains lie at 17-46 and 70-100; these read YLTA…LHGI and TIMV…HVAA. Positions 26, 29, 32, 36, 80, 83, 86, and 90 each coordinate [4Fe-4S] cluster.

[4Fe-4S] cluster is required as a cofactor.

In terms of biological role, ferredoxins are iron-sulfur proteins that transfer electrons in a wide variety of metabolic reactions. This chain is Putative ferredoxin-3 (fdxB), found in Sinorhizobium fredii (strain NBRC 101917 / NGR234).